A 96-amino-acid chain; its full sequence is Prokineticin Bm8-d (96 aa).

A signal peptide spans 1 to 19 (MKCFAQIVVLLLVIAFSHG). 5 disulfides stabilise this stretch: Cys-26–Cys-38, Cys-32–Cys-50, Cys-37–Cys-78, Cys-60–Cys-86, and Cys-80–Cys-95.

Belongs to the AVIT (prokineticin) family. In terms of tissue distribution, expressed by the skin glands.

Its subcellular location is the secreted. Functionally, potent agonist for both PKR1/PROKR1 and PKR2/PROKR2, and inducer of a potent and long-lasting hyperalgesia. Also potentiates capsaicin-induced TRPV1 current, when tested on DRG neurons. At subnanomolar concentrations, this protein both induces potent chemotaxis of macrophages and stimulates LPS-induced production of the pro-inflammatory cytokines IL-1 and IL-12. In vivo, potently stimulates the contraction of the guinea-pig gastrointestinal (GI) smooth muscle (nanomolar concentration). This Bombina maxima (Giant fire-bellied toad) protein is Prokineticin Bm8-d.